A 448-amino-acid polypeptide reads, in one-letter code: Putative F-box/LRR-repeat protein At5g25860 (448 aa).

The region spanning 11-58 (RDAVNCLPDEILAKILSYLPTKRAVSTSLISKRWRNLFALMIQLFESQ) is the F-box domain. 5 LRR repeats span residues 82 to 106 (QESFGDFVDKTLTDCNTIKKLSILC), 185 to 214 (FLHAIWFACERLCHSMLPGCPILEELFLHD), 215 to 240 (LRGYRYNDSPNFSISHKTLKRLTVHF), 310 to 341 (TLSLSPASVKMMYSRCVELHVFSNLVKLYFES), and 342 to 367 (NEKEGWEVLPRLLNKSPKLETLVLKG).

This chain is Putative F-box/LRR-repeat protein At5g25860, found in Arabidopsis thaliana (Mouse-ear cress).